Consider the following 450-residue polypeptide: Phosphoglucosamine mutase (450 aa).

Catalysis depends on Ser101, which acts as the Phosphoserine intermediate. Mg(2+) contacts are provided by Ser101, Asp240, Asp242, and Asp244. The residue at position 101 (Ser101) is a Phosphoserine.

This sequence belongs to the phosphohexose mutase family. Mg(2+) serves as cofactor. Activated by phosphorylation.

It catalyses the reaction alpha-D-glucosamine 1-phosphate = D-glucosamine 6-phosphate. Catalyzes the conversion of glucosamine-6-phosphate to glucosamine-1-phosphate. The chain is Phosphoglucosamine mutase from Streptococcus pneumoniae (strain Hungary19A-6).